We begin with the raw amino-acid sequence, 463 residues long: Cysteine--tRNA ligase (463 aa).

C29 contributes to the Zn(2+) binding site. Residues 31–41 carry the 'HIGH' region motif; sequence PTVYDFAHIGN. Zn(2+)-binding residues include C227, H252, and E256. The 'KMSKS' region signature appears at 285 to 289; it reads KMSKS. K288 contacts ATP.

Belongs to the class-I aminoacyl-tRNA synthetase family. As to quaternary structure, monomer. Zn(2+) is required as a cofactor.

Its subcellular location is the cytoplasm. It catalyses the reaction tRNA(Cys) + L-cysteine + ATP = L-cysteinyl-tRNA(Cys) + AMP + diphosphate. The sequence is that of Cysteine--tRNA ligase from Rhodopseudomonas palustris (strain ATCC BAA-98 / CGA009).